Consider the following 182-residue polypeptide: Ribulose bisphosphate carboxylase small subunit, chloroplastic (182 aa).

The N-terminal 58 residues, 1–58, are a transit peptide targeting the chloroplast; that stretch reads MACSMISSATVAAVSRASPAQSSMVAPFTCLKSTSAFPVTQKTNNDITSIASNGGRVQ.

The protein belongs to the RuBisCO small chain family. Heterohexadecamer of 8 large and 8 small subunits.

The protein localises to the plastid. It localises to the chloroplast. RuBisCO catalyzes two reactions: the carboxylation of D-ribulose 1,5-bisphosphate, the primary event in carbon dioxide fixation, as well as the oxidative fragmentation of the pentose substrate. Both reactions occur simultaneously and in competition at the same active site. Although the small subunit is not catalytic it is essential for maximal activity. The protein is Ribulose bisphosphate carboxylase small subunit, chloroplastic of Betula pendula (European white birch).